The sequence spans 421 residues: Tol-Pal system protein TolA (421 aa).

At 1 to 13 the chain is on the cytoplasmic side; sequence MSKATEQNDKLKR. A helical transmembrane segment spans residues 14–34; that stretch reads AIIISAVLHVILFAALIWSSF. The Periplasmic segment spans residues 35–421; the sequence is DENIEASAGG…FKNAPLDFKP (387 aa). Positions 48–310 are domain II (alpha-helical); it reads SSIDAVMVDS…LSSGKNAPKT (263 aa). The disordered stretch occupies residues 65–266; it reads KRMQSQESSA…KAAADKKAAA (202 aa). 2 stretches are compositionally biased toward basic and acidic residues: residues 73 to 175 and 206 to 266; these read SAKR…EAEA and EARK…KAAA. 13 tandem repeats follow at residues 224–229, 230–234, 235–240, 241–245, 246–250, 251–255, 256–260, 261–266, 267–271, 272–277, 278–282, 283–287, and 288–292. The interval 224–292 is 13 X tandem repeats of [EDA]-K(1,2)-A(2,4); it reads EKKAAAEKAA…EKAAAAKAAA (69 aa). Residues 300-336 form a disordered region; it reads ELSSGKNAPKTGGGAKGNNASPAGSGNTKNNGASGAD. The segment at 311–421 is domain III (functional); that stretch reads GGGAKGNNAS…FKNAPLDFKP (111 aa). The span at 317-332 shows a compositional bias: polar residues; the sequence is NNASPAGSGNTKNNGA. Residues Cys363 and Cys388 are joined by a disulfide bond.

Belongs to the TolA family. As to quaternary structure, the Tol-Pal system is composed of five core proteins: the inner membrane proteins TolA, TolQ and TolR, the periplasmic protein TolB and the outer membrane protein Pal. They form a network linking the inner and outer membranes and the peptidoglycan layer. TolA interacts with TolQ and TolR via its N-terminal domain. Interacts with CpoB, and with the trimeric porins OmpC, OmpF, PhoE and LamB via its central domain. Interacts with TolB via its C-terminal domain. Also interacts with Pal via its C-terminal domain. This interaction is proton motive force dependent and requires TolQ and TolR.

It is found in the cell inner membrane. Part of the Tol-Pal system, which plays a role in outer membrane invagination during cell division and is important for maintaining outer membrane integrity. The Tol-Pal system is also required for polar localization of chemoreceptors clusters. The system also appears to be required for the activity of several outer membrane-localized enzymes with cell wall remodeling activity. Is involved in the uptake of group A colicins (colicins A, E1, E2, E3, and K) and in the uptake of filamentous phage DNA. This chain is Tol-Pal system protein TolA, found in Escherichia coli (strain K12).